The following is a 115-amino-acid chain: Large ribosomal subunit protein uL22 (115 aa).

It belongs to the universal ribosomal protein uL22 family. In terms of assembly, part of the 50S ribosomal subunit.

This protein binds specifically to 23S rRNA; its binding is stimulated by other ribosomal proteins, e.g. L4, L17, and L20. It is important during the early stages of 50S assembly. It makes multiple contacts with different domains of the 23S rRNA in the assembled 50S subunit and ribosome. In terms of biological role, the globular domain of the protein is located near the polypeptide exit tunnel on the outside of the subunit, while an extended beta-hairpin is found that lines the wall of the exit tunnel in the center of the 70S ribosome. The sequence is that of Large ribosomal subunit protein uL22 from Endomicrobium trichonymphae.